Consider the following 106-residue polypeptide: Large ribosomal subunit protein bL31B (106 aa).

A disordered region spans residues 85–106; sequence PVQVAEEPVAKGKKKPSLKKKK. Basic residues predominate over residues 95–106; that stretch reads KGKKKPSLKKKK.

Belongs to the bacterial ribosomal protein bL31 family. Type B subfamily. In terms of assembly, part of the 50S ribosomal subunit.

The chain is Large ribosomal subunit protein bL31B from Chlamydia felis (strain Fe/C-56) (Chlamydophila felis).